The chain runs to 236 residues: GTP cyclohydrolase 1 (236 aa).

The segment at methionine 1–leucine 52 is disordered. The Zn(2+) site is built by cysteine 127, histidine 130, and cysteine 198.

The protein belongs to the GTP cyclohydrolase I family. Toroid-shaped homodecamer, composed of two pentamers of five dimers.

The protein resides in the cytoplasm. It is found in the nucleus. The enzyme catalyses GTP + H2O = 7,8-dihydroneopterin 3'-triphosphate + formate + H(+). Its pathway is cofactor biosynthesis; 7,8-dihydroneopterin triphosphate biosynthesis; 7,8-dihydroneopterin triphosphate from GTP: step 1/1. Its activity is regulated as follows. GTP shows a positive allosteric effect, and tetrahydrobiopterin inhibits the enzyme activity. Zinc is required for catalytic activity. Inhibited by Mg(2+). May positively regulate nitric oxide synthesis in endothelial cells. May be involved in dopamine synthesis. May modify pain sensitivity and persistence. The chain is GTP cyclohydrolase 1 (GCH1) from Gallus gallus (Chicken).